We begin with the raw amino-acid sequence, 301 residues long: Tyrosine recombinase XerD (301 aa).

The region spanning 6–89 (PLHQQLIEQF…ALKVFFHFLK (84 aa)) is the Core-binding (CB) domain. The Tyr recombinase domain maps to 108-293 (RLPSILSTEE…ASESIIEKFH (186 aa)). Residues Arg152, Lys174, His245, Arg248, and His271 contribute to the active site. The active-site O-(3'-phospho-DNA)-tyrosine intermediate is Tyr280.

Belongs to the 'phage' integrase family. XerD subfamily. As to quaternary structure, forms a cyclic heterotetrameric complex composed of two molecules of XerC and two molecules of XerD.

The protein resides in the cytoplasm. In terms of biological role, site-specific tyrosine recombinase, which acts by catalyzing the cutting and rejoining of the recombining DNA molecules. The XerC-XerD complex is essential to convert dimers of the bacterial chromosome into monomers to permit their segregation at cell division. It also contributes to the segregational stability of plasmids. This chain is Tyrosine recombinase XerD, found in Chlamydia muridarum (strain MoPn / Nigg).